Here is a 235-residue protein sequence, read N- to C-terminus: UPF0758 protein COPRO5265_1522 (235 aa).

In terms of domain architecture, MPN spans 109–235 (RITTPEDAIE…HVSLAREKLI (127 aa)). Zn(2+)-binding residues include His-184, His-186, and Asp-197. The JAMM motif signature appears at 184-197 (HNHPSGDPSPSRED).

The protein belongs to the UPF0758 family.

In Coprothermobacter proteolyticus (strain ATCC 35245 / DSM 5265 / OCM 4 / BT), this protein is UPF0758 protein COPRO5265_1522.